Here is a 384-residue protein sequence, read N- to C-terminus: Spermidine/putrescine import ATP-binding protein PotA (384 aa).

Residues 6–238 enclose the ABC transporter domain; that stretch reads IAFQNVSKVF…PINHFVATFI (233 aa). ATP is bound at residue 40–47; it reads GASGSGKS.

The protein belongs to the ABC transporter superfamily. Spermidine/putrescine importer (TC 3.A.1.11.1) family. In terms of assembly, the complex is composed of two ATP-binding proteins (PotA), two transmembrane proteins (PotB and PotC) and a solute-binding protein (PotD).

It localises to the cell membrane. It carries out the reaction ATP + H2O + polyamine-[polyamine-binding protein]Side 1 = ADP + phosphate + polyamineSide 2 + [polyamine-binding protein]Side 1.. In terms of biological role, part of the ABC transporter complex PotABCD involved in spermidine/putrescine import. Responsible for energy coupling to the transport system. The polypeptide is Spermidine/putrescine import ATP-binding protein PotA (Streptococcus thermophilus (strain ATCC BAA-491 / LMD-9)).